A 427-amino-acid chain; its full sequence is 5'-deoxyadenosine deaminase (427 aa).

Histidine 62 and histidine 64 together coordinate Zn(2+). Positions 91 and 183 each coordinate substrate. Histidine 210 provides a ligand contact to Zn(2+). Residues glutamate 213 and aspartate 298 each coordinate substrate. Aspartate 298 is a Zn(2+) binding site.

The protein belongs to the metallo-dependent hydrolases superfamily. MTA/SAH deaminase family. Homotetramer. It depends on Zn(2+) as a cofactor.

It carries out the reaction 5'-deoxyadenosine + H2O + H(+) = 5'-deoxyinosine + NH4(+). It catalyses the reaction S-adenosyl-L-homocysteine + H2O + H(+) = S-inosyl-L-homocysteine + NH4(+). The enzyme catalyses S-methyl-5'-thioadenosine + H2O + H(+) = S-methyl-5'-thioinosine + NH4(+). The catalysed reaction is adenosine + H2O + H(+) = inosine + NH4(+). It participates in amino-acid biosynthesis; S-adenosyl-L-methionine biosynthesis. Functionally, catalyzes the deamination of three SAM-derived enzymatic products, namely 5'-deoxyadenosine, S-adenosyl-L-homocysteine, and 5'-methylthioadenosine, to produce the inosine analogs. Can also deaminate adenosine. The preferred substrate for this enzyme is 5'-deoxyadenosine, but all these substrates are efficiently deaminated. Likely functions in a S-adenosyl-L-methionine (SAM) recycling pathway from S-adenosyl-L-homocysteine (SAH) produced from SAM-dependent methylation reactions. May also be involved in the recycling of 5'-deoxyadenosine, whereupon the 5'-deoxyribose moiety of 5'-deoxyinosine is further metabolized to deoxyhexoses used for the biosynthesis of aromatic amino acids in methanogens. The protein is 5'-deoxyadenosine deaminase of Methanothermobacter thermautotrophicus (strain ATCC 29096 / DSM 1053 / JCM 10044 / NBRC 100330 / Delta H) (Methanobacterium thermoautotrophicum).